We begin with the raw amino-acid sequence, 62 residues long: MSCFPVLFVMMLLVSQSVWAFPGPETRDGSVQDAESRRVRSAEEDCCENPVCKHTPGCPKGS.

An N-terminal signal peptide occupies residues 1–21; the sequence is MSCFPVLFVMMLLVSQSVWAF. Residues 22-38 constitute a propeptide that is removed on maturation; it reads PGPETRDGSVQDAESRR.

Belongs to the teretoxin A (TA) superfamily. Contains 2 disulfide bonds. In terms of tissue distribution, expressed by the venom duct.

It localises to the secreted. In Terebra anilis (Auger snail), this protein is Teretoxin Tan1.1.